The sequence spans 405 residues: Squamosa promoter-binding-like protein 6 (405 aa).

The SBP-type zinc finger occupies 121–198 (NPLCQVYGCS…AGHNERRRKP (78 aa)). Residues Cys-124, Cys-129, Cys-146, His-149, Cys-165, Cys-168, His-172, and Cys-184 each coordinate Zn(2+). The Bipartite nuclear localization signal signature appears at 181-197 (KRSCRRRLAGHNERRRK).

The cofactor is Zn(2+).

The protein localises to the nucleus. Trans-acting factor that binds specifically to the consensus nucleotide sequence 5'-TNCGTACAA-3'. This is Squamosa promoter-binding-like protein 6 (SPL6) from Arabidopsis thaliana (Mouse-ear cress).